The sequence spans 328 residues: MSSKVPFPPRLPLPSSHLPLTLISLEDWALVTLNGADTVKYLQGQLTCDVASLDADRFSFAAHCDAKGKMFSHLCVFHHHDGMAFIERRSVRDSQLAELKKYAVFSKTTITADDDAVLLGVAGFQAQAALGGLFTSVPNAAHPVAHHQDTTLLYFSLPAPRFLLITTPAVRDALQHKLEGQAQLNDSQQWLALDIEAGYPVIDSANGTQFIPQAANVQALDGISFNKGCYAGQEMVARAKYRGANKRALYWLAGKASHPPAAGDDLELKMGDNWRRTGTVLAACQLEDGSVWVQAVLNNDLASDSLLHVRDDSAGALSVQPLPYAIGE.

Folate-binding residues include Trp28 and Trp190.

The protein belongs to the tRNA-modifying YgfZ family.

The protein localises to the cytoplasm. Its function is as follows. Folate-binding protein involved in regulating the level of ATP-DnaA and in the modification of some tRNAs. It is probably a key factor in regulatory networks that act via tRNA modification, such as initiation of chromosomal replication. In Sodalis glossinidius (strain morsitans), this protein is tRNA-modifying protein YgfZ.